We begin with the raw amino-acid sequence, 302 residues long: Urease accessory protein UreD 2 (302 aa).

It belongs to the UreD family. UreD, UreF and UreG form a complex that acts as a GTP-hydrolysis-dependent molecular chaperone, activating the urease apoprotein by helping to assemble the nickel containing metallocenter of UreC. The UreE protein probably delivers the nickel.

The protein localises to the cytoplasm. Functionally, required for maturation of urease via the functional incorporation of the urease nickel metallocenter. The polypeptide is Urease accessory protein UreD 2 (Brucella ovis (strain ATCC 25840 / 63/290 / NCTC 10512)).